A 979-amino-acid chain; its full sequence is Glycine dehydrogenase (decarboxylating) (979 aa).

N6-(pyridoxal phosphate)lysine is present on Lys-724.

It belongs to the GcvP family. The glycine cleavage system is composed of four proteins: P, T, L and H. It depends on pyridoxal 5'-phosphate as a cofactor.

It catalyses the reaction N(6)-[(R)-lipoyl]-L-lysyl-[glycine-cleavage complex H protein] + glycine + H(+) = N(6)-[(R)-S(8)-aminomethyldihydrolipoyl]-L-lysyl-[glycine-cleavage complex H protein] + CO2. Functionally, the glycine cleavage system catalyzes the degradation of glycine. The P protein binds the alpha-amino group of glycine through its pyridoxal phosphate cofactor; CO(2) is released and the remaining methylamine moiety is then transferred to the lipoamide cofactor of the H protein. This is Glycine dehydrogenase (decarboxylating) from Nostoc punctiforme (strain ATCC 29133 / PCC 73102).